The sequence spans 246 residues: 1-(5-phosphoribosyl)-5-[(5-phosphoribosylamino)methylideneamino] imidazole-4-carboxamide isomerase (246 aa).

The Proton acceptor role is filled by aspartate 8. The active-site Proton donor is aspartate 130.

This sequence belongs to the HisA/HisF family.

It localises to the cytoplasm. The catalysed reaction is 1-(5-phospho-beta-D-ribosyl)-5-[(5-phospho-beta-D-ribosylamino)methylideneamino]imidazole-4-carboxamide = 5-[(5-phospho-1-deoxy-D-ribulos-1-ylimino)methylamino]-1-(5-phospho-beta-D-ribosyl)imidazole-4-carboxamide. The protein operates within amino-acid biosynthesis; L-histidine biosynthesis; L-histidine from 5-phospho-alpha-D-ribose 1-diphosphate: step 4/9. This is 1-(5-phosphoribosyl)-5-[(5-phosphoribosylamino)methylideneamino] imidazole-4-carboxamide isomerase from Alcanivorax borkumensis (strain ATCC 700651 / DSM 11573 / NCIMB 13689 / SK2).